The sequence spans 195 residues: Shikimate kinase (195 aa).

An ATP-binding site is contributed by 33-38 (GAGKTT). T37 contributes to the Mg(2+) binding site. Positions 55, 79, and 101 each coordinate substrate. Residue R139 coordinates ATP. R158 lines the substrate pocket. R175 contributes to the ATP binding site.

Belongs to the shikimate kinase family. As to quaternary structure, monomer. Mg(2+) is required as a cofactor.

It localises to the cytoplasm. It carries out the reaction shikimate + ATP = 3-phosphoshikimate + ADP + H(+). The protein operates within metabolic intermediate biosynthesis; chorismate biosynthesis; chorismate from D-erythrose 4-phosphate and phosphoenolpyruvate: step 5/7. In terms of biological role, catalyzes the specific phosphorylation of the 3-hydroxyl group of shikimic acid using ATP as a cosubstrate. The polypeptide is Shikimate kinase (Nitrosospira multiformis (strain ATCC 25196 / NCIMB 11849 / C 71)).